A 205-amino-acid chain; its full sequence is dTTP/UTP pyrophosphatase (205 aa).

Aspartate 81 functions as the Proton acceptor in the catalytic mechanism.

Belongs to the Maf family. YhdE subfamily. A divalent metal cation serves as cofactor.

The protein resides in the cytoplasm. It carries out the reaction dTTP + H2O = dTMP + diphosphate + H(+). It catalyses the reaction UTP + H2O = UMP + diphosphate + H(+). In terms of biological role, nucleoside triphosphate pyrophosphatase that hydrolyzes dTTP and UTP. May have a dual role in cell division arrest and in preventing the incorporation of modified nucleotides into cellular nucleic acids. The polypeptide is dTTP/UTP pyrophosphatase (Agathobacter rectalis (strain ATCC 33656 / DSM 3377 / JCM 17463 / KCTC 5835 / VPI 0990) (Eubacterium rectale)).